Reading from the N-terminus, the 994-residue chain is Probable beta-galactosidase C (994 aa).

A signal peptide spans 1–19 (MKLQSILSCWAILVAQIWA). Tyr-78 is a substrate binding site. N-linked (GlcNAc...) asparagine glycosylation is present at Asn-88. Substrate is bound by residues Asn-123, Ala-124, Glu-125, and Asn-183. The Proton donor role is filled by Glu-184. Tyr-247 is a binding site for substrate. Cys-253 and Cys-301 are oxidised to a cystine. An N-linked (GlcNAc...) asparagine glycan is attached at Asn-272. Glu-283 functions as the Nucleophile in the catalytic mechanism. Tyr-350 provides a ligand contact to substrate. N-linked (GlcNAc...) asparagine glycosylation is found at Asn-388, Asn-407, Asn-433, Asn-500, Asn-514, Asn-521, Asn-584, Asn-600, Asn-674, Asn-712, Asn-717, Asn-757, Asn-861, and Asn-969.

This sequence belongs to the glycosyl hydrolase 35 family.

Its subcellular location is the secreted. It catalyses the reaction Hydrolysis of terminal non-reducing beta-D-galactose residues in beta-D-galactosides.. In terms of biological role, cleaves beta-linked terminal galactosyl residues from gangliosides, glycoproteins, and glycosaminoglycans. This is Probable beta-galactosidase C (lacC) from Aspergillus niger (strain ATCC MYA-4892 / CBS 513.88 / FGSC A1513).